The following is a 165-amino-acid chain: Zinc finger C2H2 protein ECU11_0990 (165 aa).

Basic and acidic residues-rich tracts occupy residues 1 to 10 and 19 to 32; these read MEAESPKERV and DPER…DTSS. The interval 1-38 is disordered; sequence MEAESPKERVQGVSGESWDPERGVKEREDTSSKKGKGV. 2 consecutive C2H2-type zinc fingers follow at residues 103 to 125 and 136 to 158; these read FGCE…KAQH and LFCP…SRYH.

The chain is Zinc finger C2H2 protein ECU11_0990 from Encephalitozoon cuniculi (strain GB-M1) (Microsporidian parasite).